The following is a 153-amino-acid chain: Myosin regulatory light chain, smooth muscle (153 aa).

EF-hand domains lie at 12–47 (SQIQ…LGRG), 81–116 (DPEE…QADR), and 117–152 (FSQS…GQEE). Ca(2+) is bound by residues Asp25, Asn27, Asp29, and Asp36.

Functionally, in molluscan muscle, calcium regulation is associated with myosin rather than with actin. Muscle myosin contains two types of light chains: the catalytic light chain, essential for ATPase activity, and the regulatory light chain, a calcium-binding protein responsible for Ca(2+) dependent binding and Ca(2+) dependent Mg-ATPase activity. The sequence is that of Myosin regulatory light chain, smooth muscle from Halocynthia roretzi (Sea squirt).